The primary structure comprises 208 residues: Uracil phosphoribosyltransferase (208 aa).

Residues Arg78, Arg103, and Asp130–Ser138 each bind 5-phospho-alpha-D-ribose 1-diphosphate. Residues Ile193 and Gly198–Ala200 contribute to the uracil site. Position 199 (Asp199) interacts with 5-phospho-alpha-D-ribose 1-diphosphate.

The protein belongs to the UPRTase family. Requires Mg(2+) as cofactor.

It carries out the reaction UMP + diphosphate = 5-phospho-alpha-D-ribose 1-diphosphate + uracil. It participates in pyrimidine metabolism; UMP biosynthesis via salvage pathway; UMP from uracil: step 1/1. Its activity is regulated as follows. Allosterically activated by GTP. Its function is as follows. Catalyzes the conversion of uracil and 5-phospho-alpha-D-ribose 1-diphosphate (PRPP) to UMP and diphosphate. The chain is Uracil phosphoribosyltransferase from Shewanella piezotolerans (strain WP3 / JCM 13877).